The following is a 345-amino-acid chain: Phosphoribosylformylglycinamidine cyclo-ligase (345 aa).

Belongs to the AIR synthase family.

It localises to the cytoplasm. It catalyses the reaction 2-formamido-N(1)-(5-O-phospho-beta-D-ribosyl)acetamidine + ATP = 5-amino-1-(5-phospho-beta-D-ribosyl)imidazole + ADP + phosphate + H(+). It functions in the pathway purine metabolism; IMP biosynthesis via de novo pathway; 5-amino-1-(5-phospho-D-ribosyl)imidazole from N(2)-formyl-N(1)-(5-phospho-D-ribosyl)glycinamide: step 2/2. The sequence is that of Phosphoribosylformylglycinamidine cyclo-ligase from Methylococcus capsulatus (strain ATCC 33009 / NCIMB 11132 / Bath).